A 197-amino-acid polypeptide reads, in one-letter code: Translation machinery-associated protein 22 (197 aa).

Positions 103 to 174 (IRIKRVERNK…DVREFLIKNY (72 aa)) constitute an SUI1 domain.

It belongs to the DENR family. In terms of assembly, interacts with the 40S ribosomal subunit.

It localises to the cytoplasm. The sequence is that of Translation machinery-associated protein 22 (tma22) from Botryotinia fuckeliana (strain B05.10) (Noble rot fungus).